We begin with the raw amino-acid sequence, 437 residues long: Enolase 2 (437 aa).

Glutamine 162 provides a ligand contact to (2R)-2-phosphoglycerate. Glutamate 204 serves as the catalytic Proton donor. The Mg(2+) site is built by aspartate 251, glutamate 297, and aspartate 324. Residues lysine 349, arginine 378, serine 379, and lysine 400 each coordinate (2R)-2-phosphoglycerate. The active-site Proton acceptor is lysine 349.

The protein belongs to the enolase family. Requires Mg(2+) as cofactor.

Its subcellular location is the cytoplasm. The protein localises to the secreted. It is found in the cell surface. The catalysed reaction is (2R)-2-phosphoglycerate = phosphoenolpyruvate + H2O. It participates in carbohydrate degradation; glycolysis; pyruvate from D-glyceraldehyde 3-phosphate: step 4/5. Catalyzes the reversible conversion of 2-phosphoglycerate (2-PG) into phosphoenolpyruvate (PEP). It is essential for the degradation of carbohydrates via glycolysis. The sequence is that of Enolase 2 from Chlorobaculum tepidum (strain ATCC 49652 / DSM 12025 / NBRC 103806 / TLS) (Chlorobium tepidum).